Reading from the N-terminus, the 127-residue chain is Fluoride-specific ion channel FluC (127 aa).

The next 4 helical transmembrane spans lie at 3 to 23 (ALLL…LLGV), 36 to 56 (GTFA…GGLA), 72 to 92 (VGAL…ALMI), and 101 to 121 (FAYS…GLLL). The Na(+) site is built by Gly-76 and Thr-79.

The protein belongs to the fluoride channel Fluc/FEX (TC 1.A.43) family.

It localises to the cell inner membrane. The enzyme catalyses fluoride(in) = fluoride(out). Its activity is regulated as follows. Na(+) is not transported, but it plays an essential structural role and its presence is essential for fluoride channel function. Functionally, fluoride-specific ion channel. Important for reducing fluoride concentration in the cell, thus reducing its toxicity. The sequence is that of Fluoride-specific ion channel FluC from Phenylobacterium zucineum (strain HLK1).